The following is a 148-amino-acid chain: Phosphopantetheine adenylyltransferase (148 aa).

It belongs to the eukaryotic CoaD family.

Its subcellular location is the cytoplasm. It catalyses the reaction (R)-4'-phosphopantetheine + ATP + H(+) = 3'-dephospho-CoA + diphosphate. Its pathway is cofactor biosynthesis; coenzyme A biosynthesis. In terms of biological role, reversibly transfers an adenylyl group from ATP to 4'-phosphopantetheine, yielding dephospho-CoA (dPCoA) and pyrophosphate. In Archaeoglobus fulgidus (strain ATCC 49558 / DSM 4304 / JCM 9628 / NBRC 100126 / VC-16), this protein is Phosphopantetheine adenylyltransferase.